A 114-amino-acid polypeptide reads, in one-letter code: Small nuclear ribonucleoprotein SmD1a (114 aa).

In terms of domain architecture, Sm spans 2 to 74; that stretch reads KLVRFLMKLN…IRYYILPDSL (73 aa). Residues 87–114 form a disordered region; it reads VKPKKPVAGKAVGRGRGRGRGRGRGRGR. 8 repeat units span residues 99–100, 101–102, 103–104, 105–106, 107–108, 109–110, 111–112, and 113–114. Residues 99–114 form an 8 X 2 AA tandem repeats of G-R region; sequence GRGRGRGRGRGRGRGR.

The protein belongs to the snRNP core protein family.

The protein localises to the nucleus. Its subcellular location is the nucleus speckle. The protein resides in the nucleolus. Its function is as follows. Involved in splicing regulation. Facilitates post-transcriptional gene silencing (PTGS) by limiting the degradation of transgene aberrant RNAs by the RNA quality control (RQC) machinery, thus favoring their entry into cytoplasmic siRNA bodies where they can trigger PTGS. Does not participate in the production of small RNAs. The chain is Small nuclear ribonucleoprotein SmD1a from Arabidopsis thaliana (Mouse-ear cress).